A 203-amino-acid polypeptide reads, in one-letter code: SOSS complex subunit B1-A (203 aa).

Positions 22 to 92 (IVLETGRVTK…TLYTGRGGDL (71 aa)) form a DNA-binding region, OB. A disordered region spans residues 110–203 (EPNPEYIAQQ…GKESRRTGKR (94 aa)). A compositionally biased stretch (low complexity) spans 118 to 140 (QQSQSKQGQQESGTGTNNHNSSS). Over residues 149 to 182 (ENGNGSNSSGPPAHQSTAPAHSASGRITRSQPNH) the composition is skewed to polar residues.

The protein belongs to the SOSS-B family. SOSS-B1 subfamily. As to quaternary structure, component of the SOSS complex, composed of soss-b (soss-b1/nabp2 or soss-b2/nabp1), soss-a/ints3 and soss-c/inip. SOSS complexes containing soss-b1/nabp2 are more abundant than complexes containing soss-b2/nabp1.

Its subcellular location is the nucleus. Component of the SOSS complex, a multiprotein complex that functions downstream of the MRN complex to promote DNA repair and G2/M checkpoint. In the SOSS complex, acts as a sensor of single-stranded DNA that binds to single-stranded DNA. The SOSS complex associates with DNA lesions and influences diverse endpoints in the cellular DNA damage response including cell-cycle checkpoint activation, recombinational repair and maintenance of genomic stability. Required for efficient homologous recombination-dependent repair of double-strand breaks (DSBs). This is SOSS complex subunit B1-A (nabp2-a) from Xenopus laevis (African clawed frog).